We begin with the raw amino-acid sequence, 250 residues long: DNA repair protein RecO (250 aa).

This sequence belongs to the RecO family.

Functionally, involved in DNA repair and RecF pathway recombination. In Syntrophomonas wolfei subsp. wolfei (strain DSM 2245B / Goettingen), this protein is DNA repair protein RecO.